Here is a 455-residue protein sequence, read N- to C-terminus: Venom prothrombin activator nigrarin-D (455 aa).

An N-terminal signal peptide occupies residues 1 to 20 (MAPPLLLCLILTFLWNLPEA). Positions 21–40 (ESNVFLKSKVANRFLQRTKR) are excised as a propeptide. Positions 41-86 (SNSIFEEFKAGNIERECIEEKCSKEEAREVFEDNEKTETFWNVYVD) constitute a Gla domain. 11 positions are modified to 4-carboxyglutamate: glutamate 46, glutamate 47, glutamate 54, glutamate 56, glutamate 59, glutamate 60, glutamate 65, glutamate 66, glutamate 69, glutamate 72, and glutamate 75. The cysteines at positions 57 and 62 are disulfide-linked. In terms of domain architecture, EGF-like 1; calcium-binding spans 86–122 (DGDQCSSNPCHYRGTCKDGIGSYTCTCLPNYEGKNCE). Cystine bridges form between cysteine 90-cysteine 101, cysteine 95-cysteine 110, cysteine 112-cysteine 121, cysteine 129-cysteine 140, cysteine 136-cysteine 149, cysteine 151-cysteine 164, cysteine 172-cysteine 328, cysteine 216-cysteine 221, cysteine 236-cysteine 252, cysteine 376-cysteine 390, and cysteine 401-cysteine 429. The O-linked (Hex...) serine glycan is linked to serine 92. One can recognise an EGF-like 2 domain in the interval 129–164 (CRVFNGNCWHFCKSVQNEIQCSCAESYRLGDDGHSC). Residues 182–209 (REASLPDFVQSQKAILLKKSDNPSPDIR) constitute a propeptide, activation peptide. The Peptidase S1 domain maps to 210–453 (IINGMDCKLG…FIPWIKAIMS (244 aa)). The Charge relay system role is filled by histidine 251. A glycan (N-linked (GlcNAc...) asparagine) is linked at asparagine 254. The active-site Charge relay system is the aspartate 308. Serine 405 (charge relay system) is an active-site residue.

Belongs to the peptidase S1 family. Snake venom subfamily. In terms of assembly, heterodimer of a light chain and a heavy chain; disulfide-linked. In terms of processing, the vitamin K-dependent, enzymatic carboxylation of some glutamate residues allows the modified protein to bind calcium. As to expression, expressed by the venom gland.

The protein localises to the secreted. The catalysed reaction is Selective cleavage of Arg-|-Thr and then Arg-|-Ile bonds in prothrombin to form thrombin.. Its function is as follows. Snake prothrombin activator that attacks the hemostatic system of prey. This protein is functionally similar to blood coagulation factor Xa. This Cryptophis nigrescens (Eastern small-eyed snake) protein is Venom prothrombin activator nigrarin-D.